A 154-amino-acid chain; its full sequence is METIKALEKFMEFDRLQKDCSDKLDREKERRMKAEREIARKNCGGNPCERELESERSNVKRLEYQLDAEKEKVKFYKRELERDRYLSSRYLTSSSDPHEKPLPNYTFPRIKNVSPLTTEATGSVEVAPPSTDVTEPISDVTPSVDVEPEHPPAF.

Residues 17–85 (QKDCSDKLDR…YKRELERDRY (69 aa)) are a coiled coil. The segment at 88 to 154 (SRYLTSSSDP…DVEPEHPPAF (67 aa)) is disordered.

In Bos taurus (Bovine), this protein is 17 kDa A-type inclusion protein.